The primary structure comprises 174 residues: Crossover junction endodeoxyribonuclease RuvC (174 aa).

Catalysis depends on residues aspartate 8, glutamate 69, and aspartate 141. 3 residues coordinate Mg(2+): aspartate 8, glutamate 69, and aspartate 141.

This sequence belongs to the RuvC family. Homodimer which binds Holliday junction (HJ) DNA. The HJ becomes 2-fold symmetrical on binding to RuvC with unstacked arms; it has a different conformation from HJ DNA in complex with RuvA. In the full resolvosome a probable DNA-RuvA(4)-RuvB(12)-RuvC(2) complex forms which resolves the HJ. Mg(2+) is required as a cofactor.

It localises to the cytoplasm. It carries out the reaction Endonucleolytic cleavage at a junction such as a reciprocal single-stranded crossover between two homologous DNA duplexes (Holliday junction).. Functionally, the RuvA-RuvB-RuvC complex processes Holliday junction (HJ) DNA during genetic recombination and DNA repair. Endonuclease that resolves HJ intermediates. Cleaves cruciform DNA by making single-stranded nicks across the HJ at symmetrical positions within the homologous arms, yielding a 5'-phosphate and a 3'-hydroxyl group; requires a central core of homology in the junction. The consensus cleavage sequence is 5'-(A/T)TT(C/G)-3'. Cleavage occurs on the 3'-side of the TT dinucleotide at the point of strand exchange. HJ branch migration catalyzed by RuvA-RuvB allows RuvC to scan DNA until it finds its consensus sequence, where it cleaves and resolves the cruciform DNA. In Xanthomonas oryzae pv. oryzae (strain PXO99A), this protein is Crossover junction endodeoxyribonuclease RuvC.